The primary structure comprises 316 residues: CD-NTase-associated protein 12 (316 aa).

The TIR domain occupies 4–121 (RIFIGSSSEG…MLGITQTRYE (118 aa)). Residues 161–316 (STVIAISYFE…ECVEIIEPQP (156 aa)) are STING domain. Residues Phe172, Pro237, and Asp253 each coordinate 3',3'-c-di-GMP.

The protein in the C-terminal section; belongs to the bacterial STING family. Forms homodimers; in the presence of c-di-GMP forms filaments with an ordered array of parallel-stacked subunits.

The enzyme catalyses NAD(+) + H2O = ADP-D-ribose + nicotinamide + H(+). Its activity is regulated as follows. NAD(+) hydrolase activity is strongly stimulated by c-di-GMP, weakly by 3'3'-cGAMP, very weakly by c-di-AMP but not at all by 2'3'-cGAMP. Self-association of TIR domains is required for NADase activity. Functionally, effector protein of a CBASS antiviral system with NAD(+) hydrolase activity. CBASS (cyclic oligonucleotide-based antiphage signaling system) provides immunity against bacteriophage. The CD-NTase protein synthesizes cyclic nucleotides in response to infection; these serve as specific second messenger signals. The signals activate a diverse range of effectors, leading to bacterial cell death and thus abortive phage infection. A type I-D(GG) CBASS system. Binds c-di-GMP (synthesized by the cognate CdnE encoded upstream in the same operon) but not c-di-AMP, 2'-3'-cGAMP, 3'-3'-cGAMP or cUMP-AMP (tested without the N-terminal TIR domain). Upon activation by c-di-GMP forms filaments which hydrolyze NAD(+); filament formation is required for enzyme activation. The sequence is that of CD-NTase-associated protein 12 from Lachnospiraceae bacterium (strain RUG226).